A 290-amino-acid chain; its full sequence is 33 kDa chaperonin (290 aa).

2 disulfide bridges follow: C231-C233 and C263-C266.

This sequence belongs to the HSP33 family. Under oxidizing conditions two disulfide bonds are formed involving the reactive cysteines. Under reducing conditions zinc is bound to the reactive cysteines and the protein is inactive.

Its subcellular location is the cytoplasm. Its function is as follows. Redox regulated molecular chaperone. Protects both thermally unfolding and oxidatively damaged proteins from irreversible aggregation. Plays an important role in the bacterial defense system toward oxidative stress. The polypeptide is 33 kDa chaperonin (Thermotoga petrophila (strain ATCC BAA-488 / DSM 13995 / JCM 10881 / RKU-1)).